The following is a 263-amino-acid chain: Tryptophan synthase alpha chain (263 aa).

Residues E49 and D60 each act as proton acceptor in the active site.

This sequence belongs to the TrpA family. Tetramer of two alpha and two beta chains.

It catalyses the reaction (1S,2R)-1-C-(indol-3-yl)glycerol 3-phosphate + L-serine = D-glyceraldehyde 3-phosphate + L-tryptophan + H2O. It functions in the pathway amino-acid biosynthesis; L-tryptophan biosynthesis; L-tryptophan from chorismate: step 5/5. In terms of biological role, the alpha subunit is responsible for the aldol cleavage of indoleglycerol phosphate to indole and glyceraldehyde 3-phosphate. The chain is Tryptophan synthase alpha chain from Cereibacter sphaeroides (strain ATCC 17029 / ATH 2.4.9) (Rhodobacter sphaeroides).